The sequence spans 99 residues: Plastocyanin (99 aa).

The Plastocyanin-like domain maps to 1 to 99 (IEIKLGGDDG…AGMVGKVTVQ (99 aa)). Cu cation is bound by residues His37, Cys84, His87, and Met92.

It belongs to the plastocyanin family. Requires Cu(2+) as cofactor.

The protein localises to the plastid. It localises to the chloroplast thylakoid membrane. Participates in electron transfer between P700 and the cytochrome b6-f complex in photosystem I. The protein is Plastocyanin (PETE) of Rumex obtusifolius (Bitter dock).